The primary structure comprises 160 residues: 3-hydroxyacyl-[acyl-carrier-protein] dehydratase FabZ (160 aa).

H63 is a catalytic residue.

The protein belongs to the thioester dehydratase family. FabZ subfamily.

It localises to the cytoplasm. It carries out the reaction a (3R)-hydroxyacyl-[ACP] = a (2E)-enoyl-[ACP] + H2O. Involved in unsaturated fatty acids biosynthesis. Catalyzes the dehydration of short chain beta-hydroxyacyl-ACPs and long chain saturated and unsaturated beta-hydroxyacyl-ACPs. This chain is 3-hydroxyacyl-[acyl-carrier-protein] dehydratase FabZ, found in Xylella fastidiosa (strain M12).